Here is a 155-residue protein sequence, read N- to C-terminus: RNA pyrophosphohydrolase (155 aa).

The region spanning 6-148 (GYRANVAIVL…KQEVYRKALT (143 aa)) is the Nudix hydrolase domain. The Nudix box motif lies at 38-59 (GGVATGETPLQAMYRELHEEIG).

Belongs to the Nudix hydrolase family. RppH subfamily. The cofactor is a divalent metal cation.

Accelerates the degradation of transcripts by removing pyrophosphate from the 5'-end of triphosphorylated RNA, leading to a more labile monophosphorylated state that can stimulate subsequent ribonuclease cleavage. The protein is RNA pyrophosphohydrolase of Francisella tularensis subsp. tularensis (strain FSC 198).